The primary structure comprises 456 residues: Bifunctional protein GlmU (456 aa).

Residues 1 to 229 (MLNNAMSVVI…LSEVEGVNNR (229 aa)) form a pyrophosphorylase region. UDP-N-acetyl-alpha-D-glucosamine-binding positions include 11 to 14 (LAAG), K25, Q76, 81 to 82 (GT), 103 to 105 (YGD), G140, E154, N169, and N227. D105 is a Mg(2+) binding site. N227 contributes to the Mg(2+) binding site. Residues 230–250 (LQLSRLERVYQSEQAEKLLLA) are linker. The interval 251–456 (GVMLRDPARF…EGWRRPVKKK (206 aa)) is N-acetyltransferase. UDP-N-acetyl-alpha-D-glucosamine-binding residues include R333 and K351. The active-site Proton acceptor is H363. UDP-N-acetyl-alpha-D-glucosamine contacts are provided by Y366 and N377. Acetyl-CoA-binding positions include A380, 386 to 387 (NY), S405, A423, and R440.

It in the N-terminal section; belongs to the N-acetylglucosamine-1-phosphate uridyltransferase family. In the C-terminal section; belongs to the transferase hexapeptide repeat family. In terms of assembly, homotrimer. The cofactor is Mg(2+).

It is found in the cytoplasm. It carries out the reaction alpha-D-glucosamine 1-phosphate + acetyl-CoA = N-acetyl-alpha-D-glucosamine 1-phosphate + CoA + H(+). The catalysed reaction is N-acetyl-alpha-D-glucosamine 1-phosphate + UTP + H(+) = UDP-N-acetyl-alpha-D-glucosamine + diphosphate. Its pathway is nucleotide-sugar biosynthesis; UDP-N-acetyl-alpha-D-glucosamine biosynthesis; N-acetyl-alpha-D-glucosamine 1-phosphate from alpha-D-glucosamine 6-phosphate (route II): step 2/2. The protein operates within nucleotide-sugar biosynthesis; UDP-N-acetyl-alpha-D-glucosamine biosynthesis; UDP-N-acetyl-alpha-D-glucosamine from N-acetyl-alpha-D-glucosamine 1-phosphate: step 1/1. It functions in the pathway bacterial outer membrane biogenesis; LPS lipid A biosynthesis. Catalyzes the last two sequential reactions in the de novo biosynthetic pathway for UDP-N-acetylglucosamine (UDP-GlcNAc). The C-terminal domain catalyzes the transfer of acetyl group from acetyl coenzyme A to glucosamine-1-phosphate (GlcN-1-P) to produce N-acetylglucosamine-1-phosphate (GlcNAc-1-P), which is converted into UDP-GlcNAc by the transfer of uridine 5-monophosphate (from uridine 5-triphosphate), a reaction catalyzed by the N-terminal domain. In Escherichia coli O8 (strain IAI1), this protein is Bifunctional protein GlmU.